The primary structure comprises 168 residues: Photosystem I assembly protein Ycf3 (168 aa).

TPR repeat units lie at residues 35 to 68, 72 to 105, and 120 to 153; these read AFTYYRDGMSAQSEGNYAEALQNYYEAMRLEIDP, SYILYNIGLIHTSNGEHTKALEYYFRALERNPFL, and GEQAIQQGDSEIAEAWFDQAAEYWKQAIALTPGN.

Belongs to the Ycf3 family.

The protein localises to the plastid. The protein resides in the chloroplast thylakoid membrane. Its function is as follows. Essential for the assembly of the photosystem I (PSI) complex. May act as a chaperone-like factor to guide the assembly of the PSI subunits. This chain is Photosystem I assembly protein Ycf3, found in Nicotiana sylvestris (Wood tobacco).